Consider the following 275-residue polypeptide: Large ribosomal subunit protein uL2 (275 aa).

Disordered regions lie at residues 24 to 54 and 223 to 275; these read LYKGRPHDALTEKKTSKAGRNNSGRVTVRHQ and VAMN…RHKR. 2 stretches are compositionally biased toward basic and acidic residues: residues 25-38 and 229-241; these read YKGRPHDALTEKKT and DHPHGGGEGRTGE.

It belongs to the universal ribosomal protein uL2 family. As to quaternary structure, part of the 50S ribosomal subunit. Forms a bridge to the 30S subunit in the 70S ribosome.

Its function is as follows. One of the primary rRNA binding proteins. Required for association of the 30S and 50S subunits to form the 70S ribosome, for tRNA binding and peptide bond formation. It has been suggested to have peptidyltransferase activity; this is somewhat controversial. Makes several contacts with the 16S rRNA in the 70S ribosome. The protein is Large ribosomal subunit protein uL2 of Azoarcus sp. (strain BH72).